Reading from the N-terminus, the 568-residue chain is Protein yellow (568 aa).

The first 28 residues, 1 to 28 (MHAQDKGGVLPGLSLLLIAVAMVCPSQA), serve as a signal peptide directing secretion. N151 and N222 each carry an N-linked (GlcNAc...) asparagine glycan.

Belongs to the major royal jelly protein family.

It localises to the secreted. In terms of biological role, controls the pigmentation pattern of the adult cuticle and larval mouth parts. This chain is Protein yellow (y), found in Drosophila guanche (Fruit fly).